Reading from the N-terminus, the 293-residue chain is Mitochondrial glycine transporter (293 aa).

Solcar repeat units lie at residues 6-85, 102-186, and 208-291; these read GGVP…SRSA, LQSY…AKEM, and ASAM…LLKL. 6 helical membrane-spanning segments follow: residues 12–37, 60–86, 108–133, 161–184, 212–238, and 266–284; these read LVSG…TRLQ, GTLP…RSAL, LLTG…VRYE, GAAA…EQAK, VNGV…KTRM, and GLSL…AWGI.

Belongs to the mitochondrial carrier (TC 2.A.29) family. SLC25A38 subfamily.

Its subcellular location is the mitochondrion inner membrane. It catalyses the reaction glycine(in) = glycine(out). Mitochondrial glycine transporter that imports glycine into the mitochondrial matrix. Plays an important role in providing glycine for the first enzymatic step in heme biosynthesis, the condensation of glycine with succinyl-CoA to produce 5-aminolevulinate (ALA) in the mitochondrial matrix. This Eremothecium gossypii (strain ATCC 10895 / CBS 109.51 / FGSC 9923 / NRRL Y-1056) (Yeast) protein is Mitochondrial glycine transporter.